The sequence spans 304 residues: Aspartate carbamoyltransferase catalytic subunit (304 aa).

Arginine 49 and threonine 50 together coordinate carbamoyl phosphate. Lysine 77 contacts L-aspartate. Carbamoyl phosphate-binding residues include arginine 99, histidine 127, and glutamine 130. L-aspartate-binding residues include arginine 160 and arginine 211. 2 residues coordinate carbamoyl phosphate: alanine 252 and proline 253.

Belongs to the aspartate/ornithine carbamoyltransferase superfamily. ATCase family. In terms of assembly, heterododecamer (2C3:3R2) of six catalytic PyrB chains organized as two trimers (C3), and six regulatory PyrI chains organized as three dimers (R2).

It catalyses the reaction carbamoyl phosphate + L-aspartate = N-carbamoyl-L-aspartate + phosphate + H(+). It participates in pyrimidine metabolism; UMP biosynthesis via de novo pathway; (S)-dihydroorotate from bicarbonate: step 2/3. Catalyzes the condensation of carbamoyl phosphate and aspartate to form carbamoyl aspartate and inorganic phosphate, the committed step in the de novo pyrimidine nucleotide biosynthesis pathway. This Bacillus mycoides (strain KBAB4) (Bacillus weihenstephanensis) protein is Aspartate carbamoyltransferase catalytic subunit.